Reading from the N-terminus, the 121-residue chain is Large ribosomal subunit protein bL12 (121 aa).

The protein belongs to the bacterial ribosomal protein bL12 family. In terms of assembly, homodimer. Part of the ribosomal stalk of the 50S ribosomal subunit. Forms a multimeric L10(L12)X complex, where L10 forms an elongated spine to which 2 to 4 L12 dimers bind in a sequential fashion. Binds GTP-bound translation factors.

Functionally, forms part of the ribosomal stalk which helps the ribosome interact with GTP-bound translation factors. Is thus essential for accurate translation. This is Large ribosomal subunit protein bL12 from Shewanella frigidimarina (strain NCIMB 400).